We begin with the raw amino-acid sequence, 552 residues long: Dihydroxy-acid dehydratase (552 aa).

Asp-78 is a Mg(2+) binding site. Residue Cys-119 participates in [2Fe-2S] cluster binding. Residues Asp-120 and Lys-121 each contribute to the Mg(2+) site. Lys-121 carries the post-translational modification N6-carboxylysine. A [2Fe-2S] cluster-binding site is contributed by Cys-191. Glu-442 is a Mg(2+) binding site. Ser-468 (proton acceptor) is an active-site residue.

Belongs to the IlvD/Edd family. In terms of assembly, homodimer. Requires [2Fe-2S] cluster as cofactor. The cofactor is Mg(2+).

The enzyme catalyses (2R)-2,3-dihydroxy-3-methylbutanoate = 3-methyl-2-oxobutanoate + H2O. It catalyses the reaction (2R,3R)-2,3-dihydroxy-3-methylpentanoate = (S)-3-methyl-2-oxopentanoate + H2O. The protein operates within amino-acid biosynthesis; L-isoleucine biosynthesis; L-isoleucine from 2-oxobutanoate: step 3/4. Its pathway is amino-acid biosynthesis; L-valine biosynthesis; L-valine from pyruvate: step 3/4. In terms of biological role, functions in the biosynthesis of branched-chain amino acids. Catalyzes the dehydration of (2R,3R)-2,3-dihydroxy-3-methylpentanoate (2,3-dihydroxy-3-methylvalerate) into 2-oxo-3-methylpentanoate (2-oxo-3-methylvalerate) and of (2R)-2,3-dihydroxy-3-methylbutanoate (2,3-dihydroxyisovalerate) into 2-oxo-3-methylbutanoate (2-oxoisovalerate), the penultimate precursor to L-isoleucine and L-valine, respectively. In Clostridium botulinum (strain Eklund 17B / Type B), this protein is Dihydroxy-acid dehydratase.